The sequence spans 388 residues: bZIP transcription factor ABI5 homolog (388 aa).

A disordered region spans residues 1–36 (MASEMSKNVKVTDDQEVTSQERDQSGGTKVGGEEEI). At Ser44 the chain carries Phosphoserine. One can recognise a bZIP domain in the interval 302-365 (VERRQRRMIK…KQMLVEKMME (64 aa)). The tract at residues 304 to 323 (RRQRRMIKNRESAARSRARK) is basic motif. The leucine-zipper stretch occupies residues 330-344 (LEAELNYLKQENARL). The segment at 368-388 (KEKMNANRGGSQLRRSGSCMW) is disordered.

The protein belongs to the bZIP family. ABI5 subfamily. As to quaternary structure, forms homodimers. Interacts with VP1. Interacts with GF14D. Interacts with PP2C51. Interacts with SAPK2. Phosphorylated at Ser-44 by SAPK6. Expressed in roots, leaves and panicles. Expressed in seeds.

The protein localises to the nucleus. Functionally, transcription factor that possesses transactivation activity in yeast. Involved in abscisic acid (ABA) signaling pathway. Binds to the G-box motif 5'-CACGTG-3' of TRAB1 gene promoter. Involved in the regulation of pollen maturation. May act as negative regulator of salt stress response. Together with PYL5, PP2C30 and SAPK2, is part of an ABA signaling unit that modulates seed germination and early seedling growth. The sequence is that of bZIP transcription factor ABI5 homolog from Oryza sativa subsp. japonica (Rice).